The following is an 867-amino-acid chain: Protein translocase subunit SecA (867 aa).

ATP-binding positions include glutamine 86, 104-108 (GEGKT), and aspartate 499. Residues cysteine 848, cysteine 850, cysteine 859, and histidine 860 each coordinate Zn(2+).

Belongs to the SecA family. As to quaternary structure, monomer and homodimer. Part of the essential Sec protein translocation apparatus which comprises SecA, SecYEG and auxiliary proteins SecDF-YajC and YidC. Requires Zn(2+) as cofactor.

It is found in the cell membrane. The protein localises to the cytoplasm. It catalyses the reaction ATP + H2O + cellular proteinSide 1 = ADP + phosphate + cellular proteinSide 2.. Its function is as follows. Part of the Sec protein translocase complex. Interacts with the SecYEG preprotein conducting channel. Has a central role in coupling the hydrolysis of ATP to the transfer of proteins into and across the cell membrane, serving both as a receptor for the preprotein-SecB complex and as an ATP-driven molecular motor driving the stepwise translocation of polypeptide chains across the membrane. This chain is Protein translocase subunit SecA, found in Wolbachia sp. subsp. Brugia malayi (strain TRS).